Reading from the N-terminus, the 311-residue chain is AT-hook motif nuclear-localized protein 27 (311 aa).

The disordered stretch occupies residues 40-105; sequence HHHQHQQHQQ…KNKAKPPIIV (66 aa). Residues 55 to 75 are compositionally biased toward basic and acidic residues; sequence DDSRESDHSNKDHHQQGRPDS. Residues 86–98 constitute a DNA-binding region (a.T hook); the sequence is KRPRGRPPGSKNK. The PPC domain occupies 110–258; that stretch reads PNALRSHVLE…EEGGGGGGGG (149 aa). The segment at 178–183 is required for the binding to non-AHL interactors; that stretch reads GRFEIL. The interval 246-311 is disordered; that stretch reads EEEEEGGGGG…GAGTPSRPPF (66 aa). The span at 252–262 shows a compositional bias: gly residues; sequence GGGGGGGGGGP. Positions 263–277 are enriched in low complexity; it reads PQMQQAPSASPPSGV. Positions 278–292 are enriched in gly residues; sequence TGQGQLGGNVGGYGF.

Homodimer. Interacts with AHL12, AHL25, AHL29, TCP4, TCP13, EF114, ATAF2/NAC081, histone H2B.1, histone H3.3 and histone H4. In terms of tissue distribution, expressed in the hypocotyl and the vascular tissue of seedling.

The protein resides in the nucleus. In terms of biological role, transcription factor that specifically binds AT-rich DNA sequences related to the nuclear matrix attachment regions (MARs). Negatively regulates plant innate immunity (PTI) to pathogens through the down-regulation of the PAMP-triggered FRK1 expression. Acts redundantly with AHL18, AHL22 and AHL29 in the regulation of flowering and regulation of the hypocotyl elongation. Acts as a chromatin remodeling factor that negatively regulates the leaf senescence. Acts redundantly with AHL29/SOB3 to modulate hypocotyl growth inhibition in response to light. In Arabidopsis thaliana (Mouse-ear cress), this protein is AT-hook motif nuclear-localized protein 27.